The primary structure comprises 276 residues: Alpha N-terminal protein methyltransferase 1 (276 aa).

A disordered region spans residues 1–57; sequence MTTTLEEQLSDKLQMMDETTDKVQGSSKQKDDSSIAASSDAKTASPSSSDSSTKVAA. Positions 34–57 are enriched in low complexity; sequence SIAASSDAKTASPSSSDSSTKVAA. Residues glycine 114, arginine 119, 136–138, 167–168, and glutamine 182 contribute to the S-adenosyl-L-methionine site; these read EQD and LQ.

This sequence belongs to the methyltransferase superfamily. NTM1 family.

The enzyme catalyses N-terminal L-alanyl-L-prolyl-L-lysyl-[protein] + 3 S-adenosyl-L-methionine = N-terminal N,N,N-trimethyl-L-alanyl-L-prolyl-L-lysyl-[protein] + 3 S-adenosyl-L-homocysteine + 3 H(+). It carries out the reaction N-terminal L-seryl-L-prolyl-L-lysyl-[protein] + 3 S-adenosyl-L-methionine = N-terminal N,N,N-trimethyl-L-seryl-L-prolyl-L-lysyl-[protein] + 3 S-adenosyl-L-homocysteine + 3 H(+). The catalysed reaction is N-terminal L-prolyl-L-prolyl-L-lysyl-[protein] + 2 S-adenosyl-L-methionine = N-terminal N,N-dimethyl-L-prolyl-L-prolyl-L-lysyl-[protein] + 2 S-adenosyl-L-homocysteine + 2 H(+). Functionally, alpha-N-methyltransferase that methylates the N-terminus of target proteins containing the N-terminal motif [Ala/Pro/Ser]-Pro-Lys when the initiator Met is cleaved. Specifically catalyzes mono-, di- or tri-methylation of exposed alpha-amino group of Ala or Ser residue in the [Ala/Ser]-Pro-Lys motif and mono- or di-methylation of Pro in the Pro-Pro-Lys motif. The protein is Alpha N-terminal protein methyltransferase 1 (Ntmt) of Drosophila melanogaster (Fruit fly).